A 195-amino-acid polypeptide reads, in one-letter code: Probable GTP-binding protein EngB (195 aa).

The EngB-type G domain maps to 22–194 (LKGEVAFVGR…LDLISTLLKE (173 aa)). GTP-binding positions include 30-37 (GRSNVGKS), 56-60 (GKTRS), 74-77 (DLPG), 141-144 (TKMD), and 173-175 (TSS). Residues S37 and T58 each coordinate Mg(2+).

Belongs to the TRAFAC class TrmE-Era-EngA-EngB-Septin-like GTPase superfamily. EngB GTPase family. The cofactor is Mg(2+).

In terms of biological role, necessary for normal cell division and for the maintenance of normal septation. The protein is Probable GTP-binding protein EngB of Thermotoga maritima (strain ATCC 43589 / DSM 3109 / JCM 10099 / NBRC 100826 / MSB8).